A 425-amino-acid chain; its full sequence is Aspartic protease 2 (425 aa).

The first 16 residues, 1 to 16 (MRSILVLVALIGCIAA), serve as a signal peptide directing secretion. The Peptidase A1 domain maps to 72 to 421 (YLGEITIGTP…DIEKKRIGFA (350 aa)). Aspartate 90 is an active-site residue. The cysteines at positions 103 and 145 are disulfide-linked. Asparagine 163, asparagine 197, and asparagine 304 each carry an N-linked (GlcNAc...) asparagine glycan. Residue aspartate 316 is part of the active site. Cysteine 351 and cysteine 382 are disulfide-bonded. N-linked (GlcNAc...) asparagine glycans are attached at residues asparagine 354 and asparagine 365.

Belongs to the peptidase A1 family. Post-translationally, cleaved into a mature form. In terms of tissue distribution, expressed in intestine, amphidal glands and excretory gland (at protein level).

Its subcellular location is the secreted. With respect to regulation, inhibited by pepstatin A. Its function is as follows. Aspartic protease which cleaves several human serum proteins including hemoglobin, fibrinogen and albumin. Appears to cleave preferentially between P1 (Ala, Leu, Val, Phe and Gly) and P1' (Ala and Leu) residues. The chain is Aspartic protease 2 from Necator americanus (Human hookworm).